The primary structure comprises 85 residues: Large ribosomal subunit protein bL27 (85 aa).

Positions methionine 1–arginine 20 are disordered.

Belongs to the bacterial ribosomal protein bL27 family.

In Proteus mirabilis (strain HI4320), this protein is Large ribosomal subunit protein bL27.